The sequence spans 286 residues: Shikimate dehydrogenase (NADP(+)) (286 aa).

Shikimate contacts are provided by residues 20 to 22 (SLS) and threonine 65. Lysine 69 (proton acceptor) is an active-site residue. Position 81 (aspartate 81) interacts with NADP(+). Asparagine 90 and aspartate 105 together coordinate shikimate. NADP(+) contacts are provided by residues 128–132 (GAGGA) and threonine 217. Tyrosine 219 is a shikimate binding site. Glycine 240 lines the NADP(+) pocket.

It belongs to the shikimate dehydrogenase family. Homodimer.

The catalysed reaction is shikimate + NADP(+) = 3-dehydroshikimate + NADPH + H(+). Its pathway is metabolic intermediate biosynthesis; chorismate biosynthesis; chorismate from D-erythrose 4-phosphate and phosphoenolpyruvate: step 4/7. Functionally, involved in the biosynthesis of the chorismate, which leads to the biosynthesis of aromatic amino acids. Catalyzes the reversible NADPH linked reduction of 3-dehydroshikimate (DHSA) to yield shikimate (SA). In Syntrophobacter fumaroxidans (strain DSM 10017 / MPOB), this protein is Shikimate dehydrogenase (NADP(+)).